The primary structure comprises 319 residues: Homoserine O-acetyltransferase (319 aa).

Cys142 (acyl-thioester intermediate) is an active-site residue. Residues Lys163 and Ser192 each coordinate substrate. The active-site Proton acceptor is His235. Residue Glu237 is part of the active site. Arg249 contacts substrate.

Belongs to the MetA family.

It localises to the cytoplasm. It catalyses the reaction L-homoserine + acetyl-CoA = O-acetyl-L-homoserine + CoA. It functions in the pathway amino-acid biosynthesis; L-methionine biosynthesis via de novo pathway; O-acetyl-L-homoserine from L-homoserine: step 1/1. Transfers an acetyl group from acetyl-CoA to L-homoserine, forming acetyl-L-homoserine. The chain is Homoserine O-acetyltransferase from Lactococcus lactis subsp. cremoris (strain MG1363).